The chain runs to 213 residues: ATP phosphoribosyltransferase (213 aa).

It belongs to the ATP phosphoribosyltransferase family. Short subfamily. As to quaternary structure, heteromultimer composed of HisG and HisZ subunits.

It is found in the cytoplasm. It carries out the reaction 1-(5-phospho-beta-D-ribosyl)-ATP + diphosphate = 5-phospho-alpha-D-ribose 1-diphosphate + ATP. Its pathway is amino-acid biosynthesis; L-histidine biosynthesis; L-histidine from 5-phospho-alpha-D-ribose 1-diphosphate: step 1/9. Catalyzes the condensation of ATP and 5-phosphoribose 1-diphosphate to form N'-(5'-phosphoribosyl)-ATP (PR-ATP). Has a crucial role in the pathway because the rate of histidine biosynthesis seems to be controlled primarily by regulation of HisG enzymatic activity. This Methylococcus capsulatus (strain ATCC 33009 / NCIMB 11132 / Bath) protein is ATP phosphoribosyltransferase.